The primary structure comprises 309 residues: UPF0276 protein RB0508 (309 aa).

Belongs to the UPF0276 family.

The chain is UPF0276 protein RB0508 from Rhizobium meliloti (strain 1021) (Ensifer meliloti).